Consider the following 414-residue polypeptide: Chromobox protein homolog 6 (414 aa).

Positions 11-69 (FAAESIIKRRIRKGRIEYLVKWKGWAIKYSTWEPEENILDSRLIAAFEQKERERELYGP) constitute a Chromo domain. Ser-107 carries the post-translational modification Phosphoserine. Disordered stretches follow at residues 127-152 (HRMS…PISP), 267-308 (APFD…VPNW), and 344-365 (ALEP…PEMS). A compositionally biased stretch (low complexity) spans 267 to 287 (APFDAHSSSSSGCPSPTLQSS).

As to quaternary structure, component of a PRC1-like complex. Distinct PRC1-like core complexes are composed of a RING1 subunit (RING1B or RING1A), one of the six PCGF proteins (PCGF1-6), one PHC protein (PHC1-3) and one of the CBX proteins (CBX2, CBX4, CBX6, CBX7 or CBX8). Interacts with PCGF1, PCGF2, PCGF3, BMI1, PCGF5, PCGF6, RING1 and RNF2. May interact with H3C15 and H3C1. Interacts (via chromodomain) with single-stranded RNA (ssRNA). Post-translationally, ubiquitinated. Ubiquitination regulates the function of the Polycomb group (PcG) multiprotein PRC1-like complex. Deubiquitinated by USP26. In terms of tissue distribution, expressed in mouse embryonic stem cells.

The protein resides in the nucleus. It is found in the chromosome. Functionally, component of a Polycomb group (PcG) multiprotein PRC1-like complex, a complex class required to maintain the transcriptionally repressive state of many genes, including Hox genes, throughout development. PcG PRC1 complex acts via chromatin remodeling and modification of histones; it mediates monoubiquitination of histone H2A 'Lys-119', rendering chromatin heritably changed in its expressibility. Possibly contributes to the target selectivity of the PRC1 complex by binding specific regions of chromatin. Recruitment to chromatin might occur in an H3K27me3-independent fashion. May have a PRC1-independent function in embryonic stem cells. The polypeptide is Chromobox protein homolog 6 (Cbx6) (Mus musculus (Mouse)).